Reading from the N-terminus, the 439-residue chain is Hemagglutinin-esterase (439 aa).

Residues 1 to 22 form the signal peptide; that stretch reads MGRMCIAMAPRTLLLLIGCQLV. The segment at 12 to 132 is esterase domain 1; it reads TLLLLIGCQL…DNNKWMGNKA (121 aa). At 23–407 the chain is on the virion surface side; sequence FGFNEPINIV…PVCLYDPLPV (385 aa). The Nucleophile role is filled by serine 45. A disulfide bridge links cysteine 49 with cysteine 70. N-linked (GlcNAc...) asparagine; by host glycosylation is present at asparagine 94. An intrachain disulfide couples cysteine 118 to cysteine 167. Residues 133 to 281 are receptor binding; that stretch reads RFYALLYKKM…GNYKAVSLEY (149 aa). 4 N-linked (GlcNAc...) asparagine; by host glycosylation sites follow: asparagine 196, asparagine 246, asparagine 309, and asparagine 316. 2 disulfide bridges follow: cysteine 202–cysteine 291 and cysteine 210–cysteine 264. The segment at 282 to 395 is esterase domain 2; that stretch reads LLTIPSKAIC…HCPTAANIGY (114 aa). Cysteine 322 and cysteine 327 form a disulfide bridge. Residue asparagine 331 is glycosylated (N-linked (GlcNAc...) asparagine; by host). Residues aspartate 342 and histidine 345 each act as charge relay system in the active site. N-linked (GlcNAc...) asparagine; by host glycans are attached at residues asparagine 360 and asparagine 374. Cysteine 363 and cysteine 387 are joined by a disulfide. Residues 408–428 form a helical membrane-spanning segment; sequence ILLGVLLGIAVLIIVFLILYF. At 429-439 the chain is on the intravirion side; it reads MADSSVRLHEA.

This sequence belongs to the influenza type C/coronaviruses hemagglutinin-esterase family. Homodimer; disulfide-linked. Forms a complex with the M protein in the pre-Golgi. Associates then with S-M complex to form a ternary complex S-M-HE. N-glycosylated in the host RER.

It localises to the virion membrane. The protein resides in the host cell membrane. The enzyme catalyses N-acetyl-9-O-acetylneuraminate + H2O = N-acetylneuraminate + acetate + H(+). It carries out the reaction N-acetyl-4-O-acetylneuraminate + H2O = N-acetylneuraminate + acetate + H(+). Functionally, structural protein that makes short spikes at the surface of the virus. Contains receptor binding and receptor-destroying activities. Mediates de-O-acetylation of N-acetyl-4-O-acetylneuraminic acid, which is probably the receptor determinant recognized by the virus on the surface of erythrocytes and susceptible cells. This receptor-destroying activity is important for virus release as it probably helps preventing self-aggregation and ensures the efficient spread of the progeny virus from cell to cell. May serve as a secondary viral attachment protein for initiating infection, the spike protein being the major one. May become a target for both the humoral and the cellular branches of the immune system. The chain is Hemagglutinin-esterase from Rat coronavirus (strain 681) (RCV-SDAV).